We begin with the raw amino-acid sequence, 443 residues long: Serine transporter (443 aa).

11 helical membrane-spanning segments follow: residues 38 to 60 (TGWVIMSIGMAIGAGIVFLPVQV), 65 to 87 (LWVFLLSSVIGYPAMYLFQRLFI), 111 to 131 (WGILLGALYFVMLVIWMFVYS), 150 to 170 (GLLSDSPFYGLVLICILVAIS), 183 to 203 (GMVLTKLLVVAALGVSMVGMW), 215 to 235 (GLLVKNAIITLPFTLTSILFI), 265 to 285 (IAFGILFIIVFFYAVSFTLAM), 319 to 339 (VSVILNIFAVMTAFFGVYLGF), 368 to 388 (GIMIFAILLAWSAIVLNAPVL), 390 to 410 (FTSICSPIFGLVGCLIPAWLV), and 422 to 442 (MSLYLIIVTGLLLCVSPFLAF).

The protein belongs to the amino acid/polyamine transporter 2 family. SdaC/TdcC subfamily.

The protein localises to the cell inner membrane. Functionally, transports both D- and L-serine; allows growth of strain CFT073 cells normally unable to transport D-serine on that substrate. Transport relies on the H(+) gradient and is not competed by L-threonine. May play a role in L-cysteine detoxification. In Escherichia coli O157:H7, this protein is Serine transporter.